A 1057-amino-acid polypeptide reads, in one-letter code: Nuclear RNAi defective-3 protein (1057 aa).

Disordered stretches follow at residues 1-89 (MDLL…GLSV) and 344-388 (LTNS…ERTV). Low complexity predominate over residues 17–30 (STAKKPATSASSTP). Composition is skewed to basic and acidic residues over residues 67–81 (PKRE…DPKR) and 356–388 (GGRE…ERTV). One can recognise a PAZ domain in the interval 387–500 (TVSHYQRQFQ…YPMELMSILP (114 aa)). The Piwi domain occupies 677 to 1001 (GIIAEKRPDM…LAKRGHNNYK (325 aa)).

It localises to the cytoplasm. The protein localises to the nucleus. Its function is as follows. Transports small interfering RNAs (siRNAs) from the cytoplasm to the nucleus. Required for RNA interference (RNAi) in nuclei. Required for exogenous RNAi-induced H3K27 methylation. This Caenorhabditis elegans protein is Nuclear RNAi defective-3 protein (nrde-3).